The chain runs to 858 residues: Leucine--tRNA ligase (858 aa).

Residues 42–52 carry the 'HIGH' region motif; that stretch reads PYPSGRLHMGH. The 'KMSKS' region signature appears at 618 to 622; it reads KMSKS. Residue Lys-621 coordinates ATP.

The protein belongs to the class-I aminoacyl-tRNA synthetase family.

It is found in the cytoplasm. The catalysed reaction is tRNA(Leu) + L-leucine + ATP = L-leucyl-tRNA(Leu) + AMP + diphosphate. The protein is Leucine--tRNA ligase of Aeromonas salmonicida (strain A449).